The primary structure comprises 947 residues: MAEDLDKPLLDPDTFNRKGIDLGILPLEEVFEYLRTSPQGLLSGDAEERLKIFGPNRLEEKQENRFVKFLGFMWNPLSWVMEAAALMAIALANSQSLGPDWEDFTGIVCLLLINATISFFEENNAGNAAAALMARLALKTRVLRDGQWQEQDASILVPGDIISIKLGDIIPADARLLEGDPLKIDQSVLTGESLPVTKKKGEQVFSGSTCKQGEIEAVVIATGSTTFFGKTARLVDSTDVTGHFQQVLTSIGNFCICSIAVGMVLEIIIMFPVQHRSYRIGINNLLVLLIGGIPIAMPTVLSVTLAIGSHRLSQQGAITKRMTAIEEMAGMDVLCCDKTGTLTLNSLTVDKNLIEVFVDYMDKDTILLLAGRASRLENQDAIDAAIVSMLADPREARANIREIHFLPFNPVDKRTAITYIDSDGKWYRATKGAPEQVLNLCQQKNEIAQRVYAIIDRFAEKGLRSLAVAYQEIPEKSNNSPGGPWRFCGLLPLFDPPRHDSGETILRALSLGVCVKMITGDQLAIAKETGRRLGMGTNMYPSSSLLGHNNDEHEAIPVDELIEMADGFAGVFPEHKYEIVKILQEMKHVVGMTGDGVNDAPALKKADIGIAVADATDAARSSADIVLTDPGLSVIISAVLTSRAIFQRMRNYTVYAVSITIRIVLGFTLLALIWEYDFPPFMVLIIAILNDGTIMTISKDRVRPSPTPESWKLNQIFATGIVIGTYLALVTVLFYWIIVSTTFFEKHFHVKSIANNSEQVSSAMYLQVSIISQALIFVTRSRGWSFFERPGTLLIFAFILAQLAATLIAVYANISFAKITGIGWRWAGVIWLYSLIFYIPLDVIKFVFHYALSGEAWNLVLDRKTAFTYKKDYGKDDGSPNVTISQRSRSAEELRGSRSRASWIAEQTRRRAEIARLLEVHSVSRHLESVIKLKQIDQRMIRAAHTV.

The Cytoplasmic portion of the chain corresponds to 1–69 (MAEDLDKPLL…EKQENRFVKF (69 aa)). Residues 70–89 (LGFMWNPLSWVMEAAALMAI) form a helical membrane-spanning segment. The Extracellular segment spans residues 90 to 101 (ALANSQSLGPDW). A helical transmembrane segment spans residues 102-122 (EDFTGIVCLLLINATISFFEE). At 123-251 (NNAGNAAAAL…GHFQQVLTSI (129 aa)) the chain is on the cytoplasmic side. A helical membrane pass occupies residues 252–272 (GNFCICSIAVGMVLEIIIMFP). The Extracellular segment spans residues 273–281 (VQHRSYRIG). A helical membrane pass occupies residues 282–299 (INNLLVLLIGGIPIAMPT). Topologically, residues 300–650 (VLSVTLAIGS…TSRAIFQRMR (351 aa)) are cytoplasmic. The active-site 4-aspartylphosphate intermediate is the Asp-337. Mg(2+) contacts are provided by Asp-595 and Asp-599. Residues 651–672 (NYTVYAVSITIRIVLGFTLLAL) traverse the membrane as a helical segment. The Extracellular segment spans residues 673 to 677 (IWEYD). A helical membrane pass occupies residues 678-700 (FPPFMVLIIAILNDGTIMTISKD). Over 701–716 (RVRPSPTPESWKLNQI) the chain is Cytoplasmic. The helical transmembrane segment at 717–737 (FATGIVIGTYLALVTVLFYWI) threads the bilayer. Residues 738 to 758 (IVSTTFFEKHFHVKSIANNSE) lie on the Extracellular side of the membrane. Residues 759 to 779 (QVSSAMYLQVSIISQALIFVT) form a helical membrane-spanning segment. Residues 780-791 (RSRGWSFFERPG) lie on the Cytoplasmic side of the membrane. The helical transmembrane segment at 792 to 812 (TLLIFAFILAQLAATLIAVYA) threads the bilayer. The Extracellular portion of the chain corresponds to 813 to 820 (NISFAKIT). Residues 821-841 (GIGWRWAGVIWLYSLIFYIPL) form a helical membrane-spanning segment. Residues 842 to 947 (DVIKFVFHYA…QRMIRAAHTV (106 aa)) lie on the Cytoplasmic side of the membrane. Residues Ser-897 and Ser-929 each carry the phosphoserine modification. Thr-946 carries the post-translational modification Phosphothreonine.

This sequence belongs to the cation transport ATPase (P-type) (TC 3.A.3) family. Type IIIA subfamily. In terms of tissue distribution, found primarily in developing seeds. Expressed in guard cells, mesophyll cells, leaves and roots.

It localises to the membrane. It catalyses the reaction ATP + H2O + H(+)(in) = ADP + phosphate + 2 H(+)(out). Functionally, the plasma membrane H(+) ATPase of plants and fungi generates a proton gradient that drives the active transport of nutrients by H(+)-symport. The resulting external acidification and/or internal alkinization may mediate growth responses. This is ATPase 10, plasma membrane-type (AHA10) from Arabidopsis thaliana (Mouse-ear cress).